Here is a 253-residue protein sequence, read N- to C-terminus: 2,3-bisphosphoglycerate-dependent phosphoglycerate mutase (253 aa).

Residues 12-19 (RHGESEWN), 25-26 (TG), R64, 91-94 (ERHY), K102, and 118-119 (RR) contribute to the substrate site. The Tele-phosphohistidine intermediate role is filled by H13. E91 functions as the Proton donor/acceptor in the catalytic mechanism. The tract at residues 126–148 (PPLADGSEFSQSDDPRYASIPPE) is disordered. Substrate is bound at residue 187–188 (GN).

Belongs to the phosphoglycerate mutase family. BPG-dependent PGAM subfamily.

The catalysed reaction is (2R)-2-phosphoglycerate = (2R)-3-phosphoglycerate. It participates in carbohydrate degradation; glycolysis; pyruvate from D-glyceraldehyde 3-phosphate: step 3/5. In terms of biological role, catalyzes the interconversion of 2-phosphoglycerate and 3-phosphoglycerate. The protein is 2,3-bisphosphoglycerate-dependent phosphoglycerate mutase of Streptomyces avermitilis (strain ATCC 31267 / DSM 46492 / JCM 5070 / NBRC 14893 / NCIMB 12804 / NRRL 8165 / MA-4680).